The primary structure comprises 35 residues: Peptide Hact-3 (35 aa).

Expressed in tentacles.

It is found in the nematocyst. The protein localises to the secreted. In terms of biological role, peptide with unknown function. Does not exhibit antimicrobial activity against Escherichia coli and Staphylococcus aureus. The chain is Peptide Hact-3 from Heliofungia actiniformis (Mushroom coral).